The primary structure comprises 258 residues: 4-hydroxy-tetrahydrodipicolinate reductase (258 aa).

NAD(+) contacts are provided by residues 9–14 (GASGRM), 91–93 (GTT), and 115–118 (SPNM). The active-site Proton donor/acceptor is histidine 148. Residue histidine 149 participates in (S)-2,3,4,5-tetrahydrodipicolinate binding. The active-site Proton donor is lysine 152. 158–159 (GT) provides a ligand contact to (S)-2,3,4,5-tetrahydrodipicolinate.

Belongs to the DapB family.

It is found in the cytoplasm. It carries out the reaction (S)-2,3,4,5-tetrahydrodipicolinate + NAD(+) + H2O = (2S,4S)-4-hydroxy-2,3,4,5-tetrahydrodipicolinate + NADH + H(+). It catalyses the reaction (S)-2,3,4,5-tetrahydrodipicolinate + NADP(+) + H2O = (2S,4S)-4-hydroxy-2,3,4,5-tetrahydrodipicolinate + NADPH + H(+). The protein operates within amino-acid biosynthesis; L-lysine biosynthesis via DAP pathway; (S)-tetrahydrodipicolinate from L-aspartate: step 4/4. Functionally, catalyzes the conversion of 4-hydroxy-tetrahydrodipicolinate (HTPA) to tetrahydrodipicolinate. This Lawsonia intracellularis (strain PHE/MN1-00) protein is 4-hydroxy-tetrahydrodipicolinate reductase.